A 199-amino-acid chain; its full sequence is NAD(P)H dehydrogenase (quinone) (199 aa).

The Flavodoxin-like domain maps to 4 to 190 (VLVLYYSSYG…AMARFQGGHV (187 aa)). FMN is bound by residues 10–15 (SSYGHI) and 78–80 (TRF). NAD(+) is bound at residue tyrosine 12. Tryptophan 98 contributes to the substrate binding site. FMN contacts are provided by residues 113–119 (STATQHG) and histidine 134.

The protein belongs to the WrbA family. FMN serves as cofactor.

The enzyme catalyses a quinone + NADH + H(+) = a quinol + NAD(+). The catalysed reaction is a quinone + NADPH + H(+) = a quinol + NADP(+). The chain is NAD(P)H dehydrogenase (quinone) from Azoarcus sp. (strain BH72).